Consider the following 347-residue polypeptide: uncharacterized protein (347 aa).

Positions 39, 65, 95, 98, 101, 109, and 152 each coordinate Zn(2+).

The protein belongs to the zinc-containing alcohol dehydrogenase family. Zn(2+) is required as a cofactor.

This is an uncharacterized protein from Escherichia coli (strain K12).